The following is a 280-amino-acid chain: Bifunctional protein FolD (280 aa).

NADP(+) contacts are provided by residues 164 to 166, serine 189, and valine 230; that span reads GRS.

It belongs to the tetrahydrofolate dehydrogenase/cyclohydrolase family. In terms of assembly, homodimer.

It catalyses the reaction (6R)-5,10-methylene-5,6,7,8-tetrahydrofolate + NADP(+) = (6R)-5,10-methenyltetrahydrofolate + NADPH. The enzyme catalyses (6R)-5,10-methenyltetrahydrofolate + H2O = (6R)-10-formyltetrahydrofolate + H(+). The protein operates within one-carbon metabolism; tetrahydrofolate interconversion. In terms of biological role, catalyzes the oxidation of 5,10-methylenetetrahydrofolate to 5,10-methenyltetrahydrofolate and then the hydrolysis of 5,10-methenyltetrahydrofolate to 10-formyltetrahydrofolate. The polypeptide is Bifunctional protein FolD (Geotalea daltonii (strain DSM 22248 / JCM 15807 / FRC-32) (Geobacter daltonii)).